Here is a 248-residue protein sequence, read N- to C-terminus: 4-hydroxy-tetrahydrodipicolinate reductase (248 aa).

NAD(+)-binding positions include 9–14 (GAKGRV), 77–79 (GTT), and 104–107 (APNF). Histidine 134 (proton donor/acceptor) is an active-site residue. Histidine 135 serves as a coordination point for (S)-2,3,4,5-tetrahydrodipicolinate. The active-site Proton donor is the lysine 138. 144-145 (GT) contributes to the (S)-2,3,4,5-tetrahydrodipicolinate binding site.

It belongs to the DapB family.

The protein resides in the cytoplasm. It catalyses the reaction (S)-2,3,4,5-tetrahydrodipicolinate + NAD(+) + H2O = (2S,4S)-4-hydroxy-2,3,4,5-tetrahydrodipicolinate + NADH + H(+). It carries out the reaction (S)-2,3,4,5-tetrahydrodipicolinate + NADP(+) + H2O = (2S,4S)-4-hydroxy-2,3,4,5-tetrahydrodipicolinate + NADPH + H(+). It participates in amino-acid biosynthesis; L-lysine biosynthesis via DAP pathway; (S)-tetrahydrodipicolinate from L-aspartate: step 4/4. In terms of biological role, catalyzes the conversion of 4-hydroxy-tetrahydrodipicolinate (HTPA) to tetrahydrodipicolinate. This chain is 4-hydroxy-tetrahydrodipicolinate reductase, found in Corynebacterium glutamicum (strain ATCC 13032 / DSM 20300 / JCM 1318 / BCRC 11384 / CCUG 27702 / LMG 3730 / NBRC 12168 / NCIMB 10025 / NRRL B-2784 / 534).